The primary structure comprises 127 residues: Mitochondrial pyruvate carrier 2 (127 aa).

At Ser2–Thr40 the chain is on the mitochondrial matrix side. A helical transmembrane segment spans residues Val41–Ala61. The Mitochondrial intermembrane portion of the chain corresponds to Arg62–Ser72. The chain crosses the membrane as a helical span at residues Ala73–Ile90. At Pro91–Ser95 the chain is on the mitochondrial matrix side. Residues Leu96 to Trp115 traverse the membrane as a helical segment. The Mitochondrial intermembrane segment spans residues Arg116–Lys127.

This sequence belongs to the mitochondrial pyruvate carrier (MPC) (TC 2.A.105) family. In terms of assembly, homodimer. Homooligomer. Forms heterodimers with MPC1 and MPC1L. The heterodimer is the more stable and dominant form.

The protein localises to the mitochondrion inner membrane. It carries out the reaction pyruvate(out) + H(+)(out) = pyruvate(in) + H(+)(in). In terms of biological role, mediates the uptake of pyruvate into mitochondria. The sequence is that of Mitochondrial pyruvate carrier 2 (MPC2) from Pongo abelii (Sumatran orangutan).